Consider the following 308-residue polypeptide: Ornithine carbamoyltransferase (308 aa).

Carbamoyl phosphate-binding positions include 56 to 59, glutamine 83, arginine 107, and 134 to 137; these read STRT and HPCQ. Residues asparagine 165, aspartate 225, and 229–230 each bind L-ornithine; that span reads SM. Carbamoyl phosphate contacts are provided by residues 266-267 and arginine 294; that span reads CL.

This sequence belongs to the aspartate/ornithine carbamoyltransferase superfamily. OTCase family.

Its subcellular location is the cytoplasm. It catalyses the reaction carbamoyl phosphate + L-ornithine = L-citrulline + phosphate + H(+). The protein operates within amino-acid biosynthesis; L-arginine biosynthesis; L-arginine from L-ornithine and carbamoyl phosphate: step 1/3. Its function is as follows. Reversibly catalyzes the transfer of the carbamoyl group from carbamoyl phosphate (CP) to the N(epsilon) atom of ornithine (ORN) to produce L-citrulline. In Paracoccus denitrificans (strain Pd 1222), this protein is Ornithine carbamoyltransferase.